An 86-amino-acid chain; its full sequence is Toxin Aam3 (86 aa).

Positions 1-19 (MNYLVMISLALLFMIGVES) are cleaved as a signal peptide. The region spanning 21–85 (RDGYIAQPNN…PIKIIGQKCT (65 aa)) is the LCN-type CS-alpha/beta domain. 4 disulfide bridges follow: cysteine 31/cysteine 84, cysteine 35/cysteine 56, cysteine 42/cysteine 66, and cysteine 46/cysteine 68.

It belongs to the long (4 C-C) scorpion toxin superfamily. Sodium channel inhibitor family. Alpha subfamily. Post-translationally, the C-terminal basic residue is removed by a carboxypeptidase. In terms of tissue distribution, expressed by the venom gland.

The protein resides in the secreted. Functionally, alpha toxins bind voltage-independently at site-3 of sodium channels (Nav) and inhibit the inactivation of the activated channels, thereby blocking neuronal transmission. This chain is Toxin Aam3, found in Androctonus amoreuxi (African fattail scorpion).